We begin with the raw amino-acid sequence, 458 residues long: UDP-N-acetylglucosamine 1-carboxyvinyltransferase (458 aa).

34 to 35 (KN) serves as a coordination point for phosphoenolpyruvate. Arg104 serves as a coordination point for UDP-N-acetyl-alpha-D-glucosamine. Cys128 functions as the Proton donor in the catalytic mechanism. Cys128 carries the 2-(S-cysteinyl)pyruvic acid O-phosphothioketal modification. Positions 320 and 342 each coordinate UDP-N-acetyl-alpha-D-glucosamine.

Belongs to the EPSP synthase family. MurA subfamily.

It is found in the cytoplasm. It catalyses the reaction phosphoenolpyruvate + UDP-N-acetyl-alpha-D-glucosamine = UDP-N-acetyl-3-O-(1-carboxyvinyl)-alpha-D-glucosamine + phosphate. Its pathway is cell wall biogenesis; peptidoglycan biosynthesis. In terms of biological role, cell wall formation. Adds enolpyruvyl to UDP-N-acetylglucosamine. The polypeptide is UDP-N-acetylglucosamine 1-carboxyvinyltransferase (Prochlorococcus marinus (strain NATL1A)).